Reading from the N-terminus, the 563-residue chain is Probable ATP-dependent RNA helicase ddx51 (563 aa).

Positions 15-43 match the Q motif motif; that stretch reads NTLESFGIEEWLINNLKEQSIINLFPVQQ. A Helicase ATP-binding domain is found at 48–276; the sequence is FINRTEGHDI…LLQLNAPLFF (229 aa). ATP is bound at residue 61 to 68; it reads APTGSGKT. The DEAD box motif lies at 179–182; the sequence is DEAD. Residues 308–482 form the Helicase C-terminal domain; the sequence is LLNIIYESLL…SYKLGLNQMR (175 aa). Residues 493–537 form a disordered region; the sequence is IGDNGDDNNDNNNEDGNEIDGSVENIENNNNNNNNNNKNNNNNNF. Over residues 495 to 510 the composition is skewed to acidic residues; the sequence is DNGDDNNDNNNEDGNE. Low complexity predominate over residues 520–536; it reads NNNNNNNNNNKNNNNNN.

This sequence belongs to the DEAD box helicase family. DDX51/DBP6 subfamily.

It is found in the nucleus. The protein localises to the nucleolus. It carries out the reaction ATP + H2O = ADP + phosphate + H(+). Functionally, probable ATP-binding RNA helicase which may be involved in ribosome biogenesis. In Dictyostelium discoideum (Social amoeba), this protein is Probable ATP-dependent RNA helicase ddx51 (ddx51).